Consider the following 380-residue polypeptide: Queuine tRNA-ribosyltransferase (380 aa).

D96 acts as the Proton acceptor in catalysis. Residues 96–100 (DSGGF), D150, Q193, and G220 each bind substrate. Residues 251 to 257 (GVGAPDS) form an RNA binding region. D270 (nucleophile) is an active-site residue. The segment at 275–279 (TRIAR) is RNA binding; important for wobble base 34 recognition. 4 residues coordinate Zn(2+): C308, C310, C313, and H339.

Belongs to the queuine tRNA-ribosyltransferase family. As to quaternary structure, homodimer. Within each dimer, one monomer is responsible for RNA recognition and catalysis, while the other monomer binds to the replacement base PreQ1. Zn(2+) serves as cofactor.

It catalyses the reaction 7-aminomethyl-7-carbaguanine + guanosine(34) in tRNA = 7-aminomethyl-7-carbaguanosine(34) in tRNA + guanine. Its pathway is tRNA modification; tRNA-queuosine biosynthesis. In terms of biological role, catalyzes the base-exchange of a guanine (G) residue with the queuine precursor 7-aminomethyl-7-deazaguanine (PreQ1) at position 34 (anticodon wobble position) in tRNAs with GU(N) anticodons (tRNA-Asp, -Asn, -His and -Tyr). Catalysis occurs through a double-displacement mechanism. The nucleophile active site attacks the C1' of nucleotide 34 to detach the guanine base from the RNA, forming a covalent enzyme-RNA intermediate. The proton acceptor active site deprotonates the incoming PreQ1, allowing a nucleophilic attack on the C1' of the ribose to form the product. After dissociation, two additional enzymatic reactions on the tRNA convert PreQ1 to queuine (Q), resulting in the hypermodified nucleoside queuosine (7-(((4,5-cis-dihydroxy-2-cyclopenten-1-yl)amino)methyl)-7-deazaguanosine). The polypeptide is Queuine tRNA-ribosyltransferase (Streptococcus pyogenes serotype M49 (strain NZ131)).